Here is a 201-residue protein sequence, read N- to C-terminus: Recombination protein RecR (201 aa).

Residues 57 to 72 (CKYCRTFTEQEQCTIC) form a C4-type zinc finger. One can recognise a Toprim domain in the interval 81-176 (GQICVVESPA…TASRIAHGVP (96 aa)).

This sequence belongs to the RecR family.

In terms of biological role, may play a role in DNA repair. It seems to be involved in an RecBC-independent recombinational process of DNA repair. It may act with RecF and RecO. The sequence is that of Recombination protein RecR from Photorhabdus laumondii subsp. laumondii (strain DSM 15139 / CIP 105565 / TT01) (Photorhabdus luminescens subsp. laumondii).